The primary structure comprises 275 residues: Echotoxin-2 (275 aa).

Positions 1–23 (MKRNILALVVVVALISQSRPAES) are cleaved as a signal peptide. Residues 23 to 32 (SAGGTIIATL) are plays an important role in the hemolytic activity. An N-terminal region region spans residues 49-67 (ETGASVASAAAAATSSDYS). Residues glycine 123, serine 141, proline 143, tyrosine 176, and tyrosine 177 each coordinate phosphocholine. Residues 141 to 156 (SAPYNFDFYSNWLAVG) are trp-rich region, which is important for the binding to lipid membrane. The propeptide occupies 249 to 275 (RAIQQELARRAEEEKQRKRKALDEMLK).

It belongs to the actinoporin family. Sea anemone subfamily. In terms of assembly, octamer or nonamer in membranes. Monomer in the soluble state. Salivary gland.

Its subcellular location is the secreted. It localises to the nematocyst. The protein resides in the target cell membrane. In terms of biological role, pore-forming protein that forms cations-selective hydrophilic pores of around 1 nm and causes cardiac stimulation and cytolysis. Pore formation is a multi-step process that involves specific recognition of membrane sphingomyelin (but neither cholesterol nor phosphatidylcholine) using aromatic rich region and adjacent phosphocholine (POC) binding site, firm binding to the membrane (mainly driven by hydrophobic interactions) accompanied by the transfer of the N-terminal region to the lipid-water interface and finally pore formation after oligomerization of monomers. Exhibits both hemolytic and lethal activities. Gangliosides potently inhibits the hemolytic activity. The polypeptide is Echotoxin-2 (Monoplex parthenopeus (Giant triton)).